Consider the following 490-residue polypeptide: Allantoin permease (490 aa).

Helical transmembrane passes span 36–56 (IWMG…LIAI), 60–80 (PWQV…ALAL), 116–136 (AIMW…ILLL), 151–171 (ILGI…IHLL), 190–210 (LVYL…GGLG), 225–245 (TFWP…TLIL), 265–285 (FYGL…VTSG), 308–328 (YVIV…NVAA), 350–370 (GSFI…MESA), 373–393 (VYAF…VMMA), 425–445 (AFAA…VPVL), and 448–468 (LYDI…IVLM).

The protein belongs to the purine-cytosine permease (2.A.39) family.

The protein localises to the cell membrane. The enzyme catalyses (S)-allantoin(in) + H(+)(in) = (S)-allantoin(out) + H(+)(out). Uptake of allantoin into the cell. Allantoin uptake is not dependent on sodium, and PucI is likely to be a proton-coupled symporter. Shows highest recognition for binding of allantoin, good recognition for binding of hydantoin, L-5-benzylhydantoin and 5-hydroxyhydantoin, and to a lesser extent for a range of nucleobases and nucleosides. The chain is Allantoin permease from Bacillus subtilis (strain 168).